A 154-amino-acid polypeptide reads, in one-letter code: 6,7-dimethyl-8-ribityllumazine synthase (154 aa).

5-amino-6-(D-ribitylamino)uracil-binding positions include Phe-22, 56–58, and 80–82; these read AFE and AVI. Residue 85 to 86 participates in (2S)-2-hydroxy-3-oxobutyl phosphate binding; sequence AT. His-88 functions as the Proton donor in the catalytic mechanism. Phe-113 contributes to the 5-amino-6-(D-ribitylamino)uracil binding site. (2S)-2-hydroxy-3-oxobutyl phosphate is bound at residue Arg-127.

This sequence belongs to the DMRL synthase family.

The catalysed reaction is (2S)-2-hydroxy-3-oxobutyl phosphate + 5-amino-6-(D-ribitylamino)uracil = 6,7-dimethyl-8-(1-D-ribityl)lumazine + phosphate + 2 H2O + H(+). The protein operates within cofactor biosynthesis; riboflavin biosynthesis; riboflavin from 2-hydroxy-3-oxobutyl phosphate and 5-amino-6-(D-ribitylamino)uracil: step 1/2. In terms of biological role, catalyzes the formation of 6,7-dimethyl-8-ribityllumazine by condensation of 5-amino-6-(D-ribitylamino)uracil with 3,4-dihydroxy-2-butanone 4-phosphate. This is the penultimate step in the biosynthesis of riboflavin. The polypeptide is 6,7-dimethyl-8-ribityllumazine synthase (Clostridium botulinum (strain Okra / Type B1)).